A 295-amino-acid polypeptide reads, in one-letter code: Trimeric intracellular cation channel type A (295 aa).

The Lumenal portion of the chain corresponds to 1–18; the sequence is MEVLDVLNLGEIAQYFSK. A helical membrane pass occupies residues 19-37; sequence MAMFPVFDVAYYIVSILYL. Residues 38–51 lie on the Cytoplasmic side of the membrane; it reads KYEPGAVEVSRRSP. A helical transmembrane segment spans residues 52 to 75; sequence VASWLCAMLYCFGSYILADIMLGV. G74 provides a ligand contact to Ca(2+). Residues 76–86 lie on the Lumenal side of the membrane; sequence CPIDYFHNNSH. The chain crosses the membrane as a helical span at residues 87 to 106; that stretch reads ILLASAVWYLIFFCPLNLFY. The Cytoplasmic portion of the chain corresponds to 107–144; that stretch reads KCVAFMPVKLVLVALKEVVRTRKIAAGVHHAHHAYHHG. A 1,2-diacyl-sn-glycero-3-phospho-(1D-myo-inositol-4,5-bisphosphate)-binding residues include K122 and R126. The helical transmembrane segment at 145–162 threads the bilayer; the sequence is WLIMVITGYVKGSGVALM. Over 163–182 the chain is Lumenal; that stretch reads SNFEQLLRGVWKPETNEVLN. Residues 183–199 traverse the membrane as a helical segment; the sequence is MSFPTKASLYGAILFTL. Residues 200-210 lie on the Cytoplasmic side of the membrane; it reads QEAHVLPVSKS. The helical transmembrane segment at 211–227 threads the bilayer; that stretch reads TLICLFTLFMVSSKVFM. The Lumenal portion of the chain corresponds to 228–236; sequence TARHSHGSP. Residues 237–255 traverse the membrane as a helical segment; the sequence is FALIESWVCHVLFGSPLGT. At 256-295 the chain is on the cytoplasmic side; sequence EDAHDHHHAAPAAAPAPLSPAKNKEELSEGTRKRKSKKAE. The segment at 259-295 is disordered; sequence HDHHHAAPAAAPAPLSPAKNKEELSEGTRKRKSKKAE. A compositionally biased stretch (low complexity) spans 265 to 276; the sequence is APAAAPAPLSPA. A compositionally biased stretch (basic and acidic residues) spans 277–286; that stretch reads KNKEELSEGT.

Belongs to the TMEM38 family. In terms of assembly, homotrimer; conformation seems to be controled by binding to diacylglycerol (DAG).

It is found in the sarcoplasmic reticulum membrane. The protein resides in the nucleus membrane. It catalyses the reaction K(+)(in) = K(+)(out). With respect to regulation, channel activity is activated by a change of voltage within the sarcoplasmic reticulum lumen and blocked by luminal high Ca(2+) levels. Intracellular monovalent cation channel required for maintenance of rapid intracellular calcium release. Acts as a potassium counter-ion channel that functions in synchronization with calcium release from intracellular stores. Opened by a change of voltage within the sarcoplasmic reticulum lumen. The chain is Trimeric intracellular cation channel type A (tmem38a) from Danio rerio (Zebrafish).